The sequence spans 566 residues: 5'-AMP-activated protein kinase subunit gamma-2 (566 aa).

The interval 1 to 198 is disordered; that stretch reads MGSAAMDTKK…SRIYASSSPP (198 aa). The segment covering 15–25 has biased composition (low complexity); it reads SSPGGSSGKKN. A compositionally biased stretch (basic and acidic residues) spans 54–64; the sequence is NSEKHSSRKVD. 9 positions are modified to phosphoserine: Ser-65, Ser-71, Ser-73, Ser-90, Ser-138, Ser-143, Ser-158, Ser-161, and Ser-162. 2 stretches are compositionally biased toward low complexity: residues 132–144 and 156–172; these read KESS…STSP and TSSV…VTKQ. Thr-165 carries the phosphothreonine modification. The span at 180–189 shows a compositional bias: basic and acidic residues; it reads YKQEPERPES. Position 196 is a phosphoserine (Ser-196). CBS domains follow at residues 272 to 332, 354 to 412, and 427 to 489; these read PTSS…KSPM, TFKP…MSDM, and IGTY…NLDI. ADP is bound by residues Arg-299, 314 to 319, Val-359, 380 to 381, and Lys-399; these read MLTITD and HR. AMP-binding positions include Arg-299, 314-319, Val-359, His-380, 380-381, Lys-399, Thr-429, Ala-434, 455-456, 471-474, Arg-498, His-527, 527-528, and 543-546; these read MLTITD, HR, SA, SKFD, and SLSD. Residues Arg-299, 314 to 319, Val-359, 380 to 381, Arg-381, and Lys-399 contribute to the ATP site; these read MLTITD and HR. An AMPK pseudosubstrate motif is present at residues 367–388; that stretch reads LFDAVYSLIKNKIHRLPVIDPI. ADP contacts are provided by residues 471–474, Arg-498, and 527–528; these read SKFD and HR. Residues 471 to 474, Arg-498, and 527 to 528 contribute to the ATP site; these read SKFD and HR. A CBS 4 domain is found at 501-559; it reads YFEGVVKCSKLETLETIVDRIVRAEVHRLVVVNEADSIVGIISLSDILQALILTPAGAK.

This sequence belongs to the 5'-AMP-activated protein kinase gamma subunit family. As to quaternary structure, AMPK is a heterotrimer of an alpha catalytic subunit (PRKAA1 or PRKAA2), a beta (PRKAB1 or PRKAB2) and a gamma non-catalytic subunits (PRKAG1, PRKAG2 or PRKAG3). Interacts with FNIP1 and FNIP2. In terms of processing, phosphorylated by ULK1; leading to negatively regulate AMPK activity and suggesting the existence of a regulatory feedback loop between ULK1 and AMPK. Post-translationally, glycosylated; O-GlcNAcylated by OGT, promoting the AMP-activated protein kinase (AMPK) activity.

Functionally, AMP/ATP-binding subunit of AMP-activated protein kinase (AMPK), an energy sensor protein kinase that plays a key role in regulating cellular energy metabolism. In response to reduction of intracellular ATP levels, AMPK activates energy-producing pathways and inhibits energy-consuming processes: inhibits protein, carbohydrate and lipid biosynthesis, as well as cell growth and proliferation. AMPK acts via direct phosphorylation of metabolic enzymes, and by longer-term effects via phosphorylation of transcription regulators. Also acts as a regulator of cellular polarity by remodeling the actin cytoskeleton; probably by indirectly activating myosin. Gamma non-catalytic subunit mediates binding to AMP, ADP and ATP, leading to activate or inhibit AMPK: AMP-binding results in allosteric activation of alpha catalytic subunit (PRKAA1 or PRKAA2) both by inducing phosphorylation and preventing dephosphorylation of catalytic subunits. ADP also stimulates phosphorylation, without stimulating already phosphorylated catalytic subunit. ATP promotes dephosphorylation of catalytic subunit, rendering the AMPK enzyme inactive. This is 5'-AMP-activated protein kinase subunit gamma-2 (Prkag2) from Mus musculus (Mouse).